The primary structure comprises 432 residues: Cyclin-A2 (432 aa).

Met-1 carries the N-acetylmethionine modification. At Ser-5 the chain carries Phosphoserine. 2 disordered regions span residues 26 to 45 (LQED…QQPR) and 55 to 75 (SGNP…VAPL). Phosphoserine is present on Ser-55.

Belongs to the cyclin family. Cyclin AB subfamily. Interacts with the CDK1 and CDK2 protein kinases to form serine/threonine kinase holoenzyme complexes. Interacts with CDK1 (hyperphosphorylated form in G1 and underphosphorylated forms in S and G2). Interacts with CDK2; the interaction increases from G1 to G2. Interacts (associated with CDK2 but not with CDK1) with SCAPER; regulates the activity of CCNA2/CDK2 by transiently maintaining CCNA2 in the cytoplasm. Forms a ternary complex with CDK2 and CDKN1B; CDKN1B inhibits the kinase activity of CDK2 through conformational rearrangements. Interacts with INCA1. As to quaternary structure, (Microbial infection) Interacts with human cytomegalovirus protein UL32. Post-translationally, polyubiquitinated via 'Lys-11'-linked ubiquitin by the anaphase-promoting complex (APC/C), leading to its degradation by the proteasome. Deubiquitinated and stabilized by USP37 enables entry into S phase. Ubiquitinated during the G1 phase by the SCF(FBXO31) complex, leading to its proteasomal degradation.

It localises to the nucleus. It is found in the cytoplasm. Cyclin which controls both the G1/S and the G2/M transition phases of the cell cycle. Functions through the formation of specific serine/threonine protein kinase holoenzyme complexes with the cyclin-dependent protein kinases CDK1 or CDK2. The cyclin subunit confers the substrate specificity of these complexes and differentially interacts with and activates CDK1 and CDK2 throughout the cell cycle. The polypeptide is Cyclin-A2 (Homo sapiens (Human)).